The sequence spans 188 residues: Aspartic protease inhibitor 11 (188 aa).

An N-linked (GlcNAc...) asparagine glycan is attached at Asn-19. 3 cysteine pairs are disulfide-bonded: Cys-48–Cys-93, Cys-142–Cys-159, and Cys-150–Cys-153.

The protein belongs to the protease inhibitor I3 (leguminous Kunitz-type inhibitor) family.

The protein resides in the vacuole. Inhibitor of cathepsin D (aspartic protease) and trypsin (serine protease). May protect the plant by inhibiting proteases of invading organisms. The chain is Aspartic protease inhibitor 11 from Solanum tuberosum (Potato).